The primary structure comprises 481 residues: Tripartite motif-containing protein 10 (481 aa).

Residues Cys-16–Lys-61 form an RING-type zinc finger. The B box-type zinc-finger motif lies at Gly-94–Leu-135. The Zn(2+) site is built by Cys-99, His-102, Cys-121, and His-127. Residues Tyr-142–Gln-177 adopt a coiled-coil conformation. The region spanning Arg-292 to Ser-481 is the B30.2/SPRY domain.

This sequence belongs to the TRIM/RBCC family. As to quaternary structure, interacts with IFNAR1; this interaction prevents association of IFNAR1 with TYK2.

It is found in the cytoplasm. E3 ligase that plays an essential role in the differentiation and survival of terminal erythroid cells. May directly bind to PTEN and promote its ubiquitination, resulting in its proteasomal degradation and activation of hypertrophic signaling. In addition, plays a role in immune response regulation by repressing the phosphorylation of STAT1 and STAT2 in the interferon/JAK/STAT signaling pathway independent of its E3 ligase activity. Mechanistically, interacts with the intracellular domain of IFNAR1 and thereby inhibits the association of TYK2 and IFNAR1. The chain is Tripartite motif-containing protein 10 (TRIM10) from Pan troglodytes (Chimpanzee).